The following is a 279-amino-acid chain: Protein CMSS1 (279 aa).

Acidic residues predominate over residues 1 to 10 (MADDLGDEWW). The tract at residues 1-89 (MADDLGDEWW…DVLAKSEPKP (89 aa)) is disordered. A compositionally biased stretch (polar residues) spans 12–22 (NQPTGAGSSPE). Residues serine 19 and serine 24 each carry the phosphoserine modification. Omega-N-methylarginine is present on arginine 167. Threonine 212 carries the post-translational modification Phosphothreonine.

It belongs to the CMS1 family.

This Homo sapiens (Human) protein is Protein CMSS1 (CMSS1).